Reading from the N-terminus, the 334-residue chain is 4-hydroxyproline 2-epimerase (334 aa).

Cysteine 91 (proton acceptor) is an active-site residue. Substrate is bound by residues glycine 92–histidine 93, histidine 224, and aspartate 250. Residue cysteine 254 is the Proton donor of the active site. Glycine 255–threonine 256 contributes to the substrate binding site.

This sequence belongs to the proline racemase family.

It carries out the reaction trans-4-hydroxy-L-proline = cis-4-hydroxy-D-proline. Functionally, catalyzes the epimerization of trans-4-hydroxy-L-proline (t4LHyp) to cis-4-hydroxy-D-proline (c4DHyp). Is likely involved in a degradation pathway that converts t4LHyp to alpha-ketoglutarate. Displays no proline racemase activity. This Spirosoma linguale (strain ATCC 33905 / DSM 74 / LMG 10896 / Claus 1) protein is 4-hydroxyproline 2-epimerase.